The primary structure comprises 113 residues: Beta-defensin 112 (113 aa).

Intrachain disulfides connect C54–C82, C61–C75, and C65–C83.

Belongs to the beta-defensin family.

It localises to the secreted. Its function is as follows. Has antibacterial activity. The polypeptide is Beta-defensin 112 (DEFB112) (Pan troglodytes (Chimpanzee)).